Consider the following 364-residue polypeptide: Protein BRI1-5 ENHANCED 1 (364 aa).

A compositionally biased stretch (acidic residues) spans 1–11 (MVREEQEEDDN). Residues 1–22 (MVREEQEEDDNNNNNNGGGERK) form a disordered region. Residues 44-49 (GGSGFV), Arg-69, 98-99 (DL), Tyr-202, Lys-206, Val-232, and Ser-244 each bind NADP(+). Catalysis depends on Lys-206, which acts as the Proton donor.

Belongs to the NAD(P)-dependent epimerase/dehydratase family. Monomer. In terms of tissue distribution, mainly present in cell elongating-containing tissues. Strongly expressed in roots and flowers, also observed in petioles, stems, leaves and siliques.

Its subcellular location is the cytoplasm. Its pathway is plant hormone biosynthesis; brassinosteroid biosynthesis. Its function is as follows. Element of the brassinosteroid metabolic pathway that regulates typhasterol (TY), castasterone (CS) and brassinolide (BL) levels. Involved in the control of organ elongation. The protein is Protein BRI1-5 ENHANCED 1 of Arabidopsis thaliana (Mouse-ear cress).